An 86-amino-acid chain; its full sequence is Small ribosomal subunit protein bS20 (86 aa).

This sequence belongs to the bacterial ribosomal protein bS20 family.

Binds directly to 16S ribosomal RNA. This is Small ribosomal subunit protein bS20 from Kineococcus radiotolerans (strain ATCC BAA-149 / DSM 14245 / SRS30216).